A 112-amino-acid chain; its full sequence is Nitrogen regulatory protein P-II (112 aa).

The residue at position 49 (Ser-49) is a Phosphoserine. Tyr-51 is modified (O-UMP-tyrosine).

It belongs to the P(II) protein family. As to quaternary structure, homotrimer. Post-translationally, phosphorylation dependent on the nitrogen source and spectral light quality.

P-II indirectly controls the transcription of the GS gene (glnA). P-II prevents NR-II-catalyzed conversion of NR-I to NR-I-phosphate, the transcriptional activator of glnA. When P-II is phosphorylated, these events are reversed. In nitrogen-limiting conditions, when the ratio of Gln to 2-ketoglutarate decreases, P-II is phosphorylated which allows the deadenylation of glutamine synthetase (GS), thus activating the enzyme. The protein is Nitrogen regulatory protein P-II (glnB) of Synechococcus elongatus (strain ATCC 33912 / PCC 7942 / FACHB-805) (Anacystis nidulans R2).